Consider the following 450-residue polypeptide: MTDRRPTIMDKAKKQWEVMALNSLLILFTNFAIFLSMPPQTEIFEDIICSKMHSESALHPQGEDDGCRGALVQSELARINGWKTTFEALPRMLLSEAWTRVVCIYSDVLPLSLVWLSGLLRSVGGGEPVIDSIMCVMVMDVFEESDRAVALLRLHSVFIVAKIFAAPASAALVALTSAWTPFLISLAMLFVAQALSFLLPETLGYVEQKEPDDSRAHKMAGKKGNLNQRFALAARLIVQNRNMAPIIIVNLVASITKSSNHFLLQYSSTKYEWSYSQSNLVLVIREASSLLTYLVLMPAASKAIRRVSSKSVTAQDKRLCQGSGLLNVFGFFSIALAGTPVVYVLALAFLSLGSGFDTAMSGFATSLVQPDQIASLHSTAATAKSLGGLVAGPLFARLMQVGFELGSGWLGIPYIAAGLFFITVLVAVCSIRIQSRSLDEDGQPLLQTDV.

8 helical membrane passes run 18 to 38 (VMALNSLLILFTNFAIFLSMP), 100 to 120 (RVVCIYSDVLPLSLVWLSGLL), 148 to 168 (AVALLRLHSVFIVAKIFAAPA), 171 to 191 (ALVALTSAWTPFLISLAMLFV), 244 to 264 (APIIIVNLVASITKSSNHFLL), 280 to 300 (LVLVIREASSLLTYLVLMPAA), 329 to 349 (FGFFSIALAGTPVVYVLALAF), and 408 to 428 (GWLGIPYIAAGLFFITVLVAV).

Belongs to the major facilitator superfamily.

It is found in the membrane. It participates in secondary metabolite biosynthesis. Functionally, MFS-type transporter; part of the cluster that mediates the biosynthesis of a highly modified cyclo-arginine-tryptophan dipeptide (cRW). This is MFS-type transporter avaK from Aspergillus versicolor.